Consider the following 101-residue polypeptide: Small ribosomal subunit protein uS14 (101 aa).

This sequence belongs to the universal ribosomal protein uS14 family. In terms of assembly, part of the 30S ribosomal subunit. Contacts proteins S3 and S10.

Its function is as follows. Binds 16S rRNA, required for the assembly of 30S particles and may also be responsible for determining the conformation of the 16S rRNA at the A site. The sequence is that of Small ribosomal subunit protein uS14 from Anaplasma phagocytophilum (strain HZ).